Here is a 115-residue protein sequence, read N- to C-terminus: Large ribosomal subunit protein bL19 (115 aa).

Belongs to the bacterial ribosomal protein bL19 family.

This protein is located at the 30S-50S ribosomal subunit interface and may play a role in the structure and function of the aminoacyl-tRNA binding site. In Clostridium kluyveri (strain ATCC 8527 / DSM 555 / NBRC 12016 / NCIMB 10680 / K1), this protein is Large ribosomal subunit protein bL19.